Here is a 137-residue protein sequence, read N- to C-terminus: Small ribosomal subunit protein uS11 (137 aa).

The disordered stretch occupies residues 116–137; the sequence is EDVTPIPHDGTRPKGGRRGRRV.

The protein belongs to the universal ribosomal protein uS11 family. In terms of assembly, part of the 30S ribosomal subunit.

Its function is as follows. Located on the platform of the 30S subunit. The chain is Small ribosomal subunit protein uS11 from Pyrococcus furiosus (strain ATCC 43587 / DSM 3638 / JCM 8422 / Vc1).